We begin with the raw amino-acid sequence, 143 residues long: Putative RNA polymerase II subunit B1 CTD phosphatase RPAP2 homolog (143 aa).

The segment at 46-129 (SLLCEIGPPN…VPTSPLWLRD (84 aa)) adopts an RTR1-type zinc-finger fold. Zn(2+)-binding residues include C69, C74, C105, and C109.

This sequence belongs to the RPAP2 family.

It localises to the nucleus. It carries out the reaction O-phospho-L-seryl-[protein] + H2O = L-seryl-[protein] + phosphate. It catalyses the reaction O-phospho-L-threonyl-[protein] + H2O = L-threonyl-[protein] + phosphate. Its function is as follows. Putative RNA polymerase II subunit B1 C-terminal domain (CTD) phosphatase involved in RNA polymerase II transcription regulation. This chain is Putative RNA polymerase II subunit B1 CTD phosphatase RPAP2 homolog, found in Drosophila melanogaster (Fruit fly).